We begin with the raw amino-acid sequence, 406 residues long: MTDTVEDVELPYDDSASQQDKLEALEEQLSTLEEENEEMRDRLLDANAENNKYQQKLERLSHENKKLKQSPLFIATVQELTDEGAVIKQHGNNQEALTEVTDELRATLEPGSRVAVNNSLSVVRQLDDEADVRARVMEVDDSPDVGYEDIGGLDDQLREVRETVELPMKDPGLFETVGINPPSGVLLHGPPGTGKTLMAKAVASQTDASFIKMAGSELVHKFIGEGAKLVRDLFQVARDHEPAVVFIDEIDAIASKRTDSKTSGDAEVQRTMMQLLSEMDGFDERGDIRIIAATNRFDMLDRAILRPGRFDRLIEVPHPNVGGREKIFRIHTRAMNVADSVDFGELAADTGDLSGADVKAICTEAGMFAIRDDRTEVRMQDFQSAREKLDQDSEPAAATDVSRTFA.

The span at 1–12 shows a compositional bias: acidic residues; the sequence is MTDTVEDVELPY. The interval 1 to 20 is disordered; the sequence is MTDTVEDVELPYDDSASQQD. Residues 12–70 adopt a coiled-coil conformation; the sequence is YDDSASQQDKLEALEEQLSTLEEENEEMRDRLLDANAENNKYQQKLERLSHENKKLKQS. ATP is bound by residues 192-197 and H331; that span reads GTGKTL. The disordered stretch occupies residues 385–406; that stretch reads AREKLDQDSEPAAATDVSRTFA. The segment at 404–406 is docks into pockets in the proteasome alpha-ring to cause gate opening; sequence TFA.

Belongs to the AAA ATPase family. In terms of assembly, homohexamer. The hexameric complex has a two-ring architecture resembling a top hat that caps the 20S proteasome core at one or both ends. Upon ATP-binding, the C-terminus of PAN interacts with the alpha-rings of the proteasome core by binding to the intersubunit pockets.

It localises to the cytoplasm. ATPase which is responsible for recognizing, binding, unfolding and translocation of substrate proteins into the archaeal 20S proteasome core particle. Is essential for opening the gate of the 20S proteasome via an interaction with its C-terminus, thereby allowing substrate entry and access to the site of proteolysis. Thus, the C-termini of the proteasomal ATPase function like a 'key in a lock' to induce gate opening and therefore regulate proteolysis. Unfolding activity requires energy from ATP hydrolysis, whereas ATP binding alone promotes ATPase-20S proteasome association which triggers gate opening, and supports translocation of unfolded substrates. This Halobacterium salinarum (strain ATCC 700922 / JCM 11081 / NRC-1) (Halobacterium halobium) protein is Proteasome-activating nucleotidase 1.